A 746-amino-acid polypeptide reads, in one-letter code: Ribosome biogenesis protein BOP1 (746 aa).

Residues Met-1–Ala-116 are disordered. The segment covering Ser-43–Asp-65 has biased composition (low complexity). Over residues Ser-66 to Asp-87 the composition is skewed to acidic residues. Over residues Asp-88–Glu-99 the composition is skewed to basic and acidic residues. Thr-106 is subject to Phosphothreonine. The residue at position 122 (Tyr-122) is a Phosphotyrosine. Phosphoserine occurs at positions 126 and 127. The sufficient for nucleolar localization stretch occupies residues Met-265–Trp-427. 7 WD repeats span residues Gly-411–Thr-450, Pro-452–Ala-492, Cys-532–Arg-576, Arg-577–Lys-615, Pro-618–Arg-657, His-661–Gln-700, and Thr-716–Thr-746.

This sequence belongs to the WD repeat BOP1/ERB1 family. In terms of assembly, component of the PeBoW complex, composed of BOP1, PES1 and WDR12. The complex is held together by BOP1, which interacts with PES1 via its N-terminal domain and with WDR12 via a high-affinity interaction between the seven-bladed beta-propeller domains of the 2 proteins. The NOP7 complex associates with the 66S pre-ribosome. The PeBoW complex associates with DDX27, BOP1 interacts directly with DDX27.

Its subcellular location is the nucleus. The protein localises to the nucleolus. It is found in the nucleoplasm. Its function is as follows. Component of the PeBoW complex, which is required for maturation of 28S and 5.8S ribosomal RNAs and formation of the 60S ribosome. The polypeptide is Ribosome biogenesis protein BOP1 (Homo sapiens (Human)).